The following is a 253-amino-acid chain: Ribosomal RNA small subunit methyltransferase J (253 aa).

S-adenosyl-L-methionine is bound by residues 101-102 (RD), 117-118 (ER), and aspartate 169.

This sequence belongs to the methyltransferase superfamily. RsmJ family.

Its subcellular location is the cytoplasm. It carries out the reaction guanosine(1516) in 16S rRNA + S-adenosyl-L-methionine = N(2)-methylguanosine(1516) in 16S rRNA + S-adenosyl-L-homocysteine + H(+). In terms of biological role, specifically methylates the guanosine in position 1516 of 16S rRNA. The polypeptide is Ribosomal RNA small subunit methyltransferase J (Psychromonas ingrahamii (strain DSM 17664 / CCUG 51855 / 37)).